The chain runs to 450 residues: ATP-dependent protease ATPase subunit HslU (450 aa).

Residues Val-29, 71 to 76 (GVGKTE), Asp-261, Glu-328, and Arg-400 contribute to the ATP site.

Belongs to the ClpX chaperone family. HslU subfamily. As to quaternary structure, a double ring-shaped homohexamer of HslV is capped on each side by a ring-shaped HslU homohexamer. The assembly of the HslU/HslV complex is dependent on binding of ATP.

It is found in the cytoplasm. In terms of biological role, ATPase subunit of a proteasome-like degradation complex; this subunit has chaperone activity. The binding of ATP and its subsequent hydrolysis by HslU are essential for unfolding of protein substrates subsequently hydrolyzed by HslV. HslU recognizes the N-terminal part of its protein substrates and unfolds these before they are guided to HslV for hydrolysis. This is ATP-dependent protease ATPase subunit HslU from Rickettsia africae (strain ESF-5).